A 174-amino-acid polypeptide reads, in one-letter code: Nicotinamide-nucleotide adenylyltransferase (174 aa).

This sequence belongs to the archaeal NMN adenylyltransferase family.

It localises to the cytoplasm. It catalyses the reaction beta-nicotinamide D-ribonucleotide + ATP + H(+) = diphosphate + NAD(+). It functions in the pathway cofactor biosynthesis; NAD(+) biosynthesis; NAD(+) from nicotinamide D-ribonucleotide: step 1/1. The protein is Nicotinamide-nucleotide adenylyltransferase of Archaeoglobus fulgidus (strain ATCC 49558 / DSM 4304 / JCM 9628 / NBRC 100126 / VC-16).